Consider the following 67-residue polypeptide: Small ribosomal subunit protein bS21 (67 aa).

This sequence belongs to the bacterial ribosomal protein bS21 family.

The polypeptide is Small ribosomal subunit protein bS21 (Acidiphilium cryptum (strain JF-5)).